The chain runs to 872 residues: Leucine--tRNA ligase (872 aa).

Positions Pro42–His52 match the 'HIGH' region motif. Positions Thr634–Ser638 match the 'KMSKS' region motif. ATP is bound at residue Lys637.

The protein belongs to the class-I aminoacyl-tRNA synthetase family.

Its subcellular location is the cytoplasm. The catalysed reaction is tRNA(Leu) + L-leucine + ATP = L-leucyl-tRNA(Leu) + AMP + diphosphate. The protein is Leucine--tRNA ligase of Nostoc sp. (strain PCC 7120 / SAG 25.82 / UTEX 2576).